A 1141-amino-acid chain; its full sequence is Isoleucine--tRNA ligase (1141 aa).

Positions 50–60 (PSANGMPGIHH) match the 'HIGH' region motif. The short motif at 689–693 (KMSKR) is the 'KMSKS' region element. Position 692 (K692) interacts with ATP.

This sequence belongs to the class-I aminoacyl-tRNA synthetase family. IleS type 2 subfamily. As to quaternary structure, monomer. The cofactor is Zn(2+).

The protein localises to the cytoplasm. The catalysed reaction is tRNA(Ile) + L-isoleucine + ATP = L-isoleucyl-tRNA(Ile) + AMP + diphosphate. Its function is as follows. Catalyzes the attachment of isoleucine to tRNA(Ile). As IleRS can inadvertently accommodate and process structurally similar amino acids such as valine, to avoid such errors it has two additional distinct tRNA(Ile)-dependent editing activities. One activity is designated as 'pretransfer' editing and involves the hydrolysis of activated Val-AMP. The other activity is designated 'posttransfer' editing and involves deacylation of mischarged Val-tRNA(Ile). The chain is Isoleucine--tRNA ligase from Bacteroides fragilis (strain ATCC 25285 / DSM 2151 / CCUG 4856 / JCM 11019 / LMG 10263 / NCTC 9343 / Onslow / VPI 2553 / EN-2).